A 425-amino-acid polypeptide reads, in one-letter code: Serine--tRNA ligase (425 aa).

The tract at residues 108 to 134 is disordered; it reads YPNLPSEACPDGRSEDDNKEVRRWGDP. The span at 117–134 shows a compositional bias: basic and acidic residues; sequence PDGRSEDDNKEVRRWGDP. 233–235 lines the L-serine pocket; that stretch reads TAE. 264–266 is a binding site for ATP; the sequence is RRE. E287 serves as a coordination point for L-serine. 351–354 lines the ATP pocket; the sequence is EISS. S385 provides a ligand contact to L-serine.

It belongs to the class-II aminoacyl-tRNA synthetase family. Type-1 seryl-tRNA synthetase subfamily. Homodimer. The tRNA molecule binds across the dimer.

The protein resides in the cytoplasm. The catalysed reaction is tRNA(Ser) + L-serine + ATP = L-seryl-tRNA(Ser) + AMP + diphosphate + H(+). It catalyses the reaction tRNA(Sec) + L-serine + ATP = L-seryl-tRNA(Sec) + AMP + diphosphate + H(+). Its pathway is aminoacyl-tRNA biosynthesis; selenocysteinyl-tRNA(Sec) biosynthesis; L-seryl-tRNA(Sec) from L-serine and tRNA(Sec): step 1/1. In terms of biological role, catalyzes the attachment of serine to tRNA(Ser). Is also able to aminoacylate tRNA(Sec) with serine, to form the misacylated tRNA L-seryl-tRNA(Sec), which will be further converted into selenocysteinyl-tRNA(Sec). In Synechococcus sp. (strain CC9311), this protein is Serine--tRNA ligase.